The primary structure comprises 985 residues: MSECGGRGGGSSSSEDAEDEGGGGGGPAGSDCLSSSPTLATASSAGRLRRGLRGAFLMARQRPELLCGAVALGCALLLALKFTCSRAKDVIIPAKPPVSFFSLRSPVLDLFQGQLDYAEYVRRDSEVVLLFFYAPWCGQSIAARAEIEQAASRLSDQVLFVAINCWWNQGKCRKQKHFFYFPVIYLYHRSFGPIEYKGPMSAVYIEKFVRRVMKPLLYIPSQSELLDFLSNYEPGVLGYFEFSGSPQPPGYLTFFTSALHSLKKALESTSSPRALVSFTGEWHLETKIYVLDYLGTVRFGVITNKHLAKLVSLVHSGSVYLHRHFNTSLVFPREVLNYTAENICKWALENQETLFRWLRPHGGKSLLLNNELKKGPALFLFIPFNPLAESHPLIDEITEVALEYNNCHGDQVVERLLQHLRRVDAPVLESLALEVPAQLPDPPTITASPCCNTVVLPQWHSFSRTHNVCELCVNQTSGGMKPSSVSVPQCSFFEMAAALDSFYLKEQTFYHVASDSIECSNFLTSYSPFSYYTACCRTISRGVSGFIDSEQGVFEAPTVAFSSLEKKCEVDAPSSVPHIEENRYLFPEVDMTSTNFTGLSCRTNKTLNIYLLDSNLFWLYAERLGAPSSTQVKEFAAIVDVKEESHYILDPKQALMKLTLESFIQNFSVLYSPLKRHLIGSGSAQFPSQHLITEVTTDTFWEVVLQKQDVLLLYYAPWCGFCPSLNHIFIQLARNLPMDTFTVARIDVSQNDLPWEFMVDRLPTVLFFPCNRKDLSVKYPEDVPITLPNLLRFILHHSDPASSPQNVANSPTKECLQSEAVLQRGHISHLEREIQKLRAEISSLQRAQVQVESQLSSARRDEHRLRQQQRALEEQHSLLHAHSEQLQALYEQKTRELQELARKLQELADASENLLTENTWLKILVATMERKLEGRDGAESLAAQREVHPKQPEPSATPQLPGSSPPPANVSATLVSERNKENRTD.

The span at Met1 to Ser11 shows a compositional bias: gly residues. A disordered region spans residues Met1–Thr38. A compositionally biased stretch (low complexity) spans Gly29–Thr38. The chain crosses the membrane as a helical span at residues Leu65–Ser85. Residues Ile92–Lys214 enclose the Thioredoxin 1 domain. Cystine bridges form between Cys469–Cys472 and Cys719–Cys722. The 151-residue stretch at Leu649–Asp799 folds into the Thioredoxin 2 domain. A coiled-coil region spans residues Val821 to Thr919. Position 828 is a phosphoserine (Ser828). Residues Arg935–Asp985 form a disordered region.

The protein belongs to the protein disulfide isomerase family. In terms of assembly, interacts with the cytoplasmic part of DUOX1 and DUOX2. Interacts with TPO and CYBA. In terms of tissue distribution, widely expressed at low level. Expressed at higher level in thyroid and prostate.

The protein localises to the endoplasmic reticulum membrane. May act as a redox regulator involved in DUOX proteins folding. The interaction with DUOX1 and DUOX2 suggest that it belongs to a multiprotein complex constituting the thyroid H(2)O(2) generating system. It is however not sufficient to assist DUOX1 and DUOX2 in H(2)O(2) generation. This chain is Thioredoxin domain-containing protein 11 (TXNDC11), found in Homo sapiens (Human).